Reading from the N-terminus, the 249-residue chain is NADH dehydrogenase [ubiquinone] flavoprotein 2, mitochondrial (249 aa).

The transit peptide at 1–32 directs the protein to the mitochondrion; it reads MFLSAALRARAAGLAAHWGKHIRNLHKTAVQN. Lys-61 bears the N6-acetyllysine mark. 4 residues coordinate [2Fe-2S] cluster: Cys-135, Cys-140, Cys-176, and Cys-180. Tyr-193 is modified (phosphotyrosine; by SRC). Positions 213 to 249 are disordered; it reads IPKPGPRSGRFSCEPAGGLTSLTEPPKGPGFGVQAGL.

This sequence belongs to the complex I 24 kDa subunit family. Core subunit of respiratory chain NADH dehydrogenase (Complex I) which is composed of 45 different subunits. This is a component of the flavoprotein-sulfur (FP) fragment of the enzyme. Requires [2Fe-2S] cluster as cofactor.

Its subcellular location is the mitochondrion inner membrane. The catalysed reaction is a ubiquinone + NADH + 5 H(+)(in) = a ubiquinol + NAD(+) + 4 H(+)(out). Its function is as follows. Core subunit of the mitochondrial membrane respiratory chain NADH dehydrogenase (Complex I) which catalyzes electron transfer from NADH through the respiratory chain, using ubiquinone as an electron acceptor. Parts of the peripheral arm of the enzyme, where the electrons from NADH are accepted by flavin mononucleotide (FMN) and then passed along a chain of iron-sulfur clusters by electron tunnelling to the final acceptor ubiquinone. Contains one iron-sulfur cluster. This is NADH dehydrogenase [ubiquinone] flavoprotein 2, mitochondrial (NDUFV2) from Bos taurus (Bovine).